Here is a 226-residue protein sequence, read N- to C-terminus: MKIVAPVMPRNVEEAQSIDVSKYQDVNLIEWRADFLPKEDIVSVAPAIFEKFAGREIIFTLRTSQEGGHITLSDQEYVDLIKEINAIYNPDYIDFEYFSHKAVFHEMLDFPNLVLSYHNFDETPENLMEAFSEMTKLAPRVVKIAVMPQSEQDVLDLMNYTRGFKTLNPEQEFATMSMGRLGRLSRLAGDVVGSSWTFVSLDQASAPGQVSLADMKRILHILESED.

Residues 30 to 32 (EWR) and arginine 62 contribute to the 3-dehydroquinate site. The active-site Proton donor/acceptor is histidine 118. Lysine 143 acts as the Schiff-base intermediate with substrate in catalysis. 3-dehydroquinate-binding residues include arginine 186, serine 205, and glutamine 209.

The protein belongs to the type-I 3-dehydroquinase family. As to quaternary structure, homodimer.

The enzyme catalyses 3-dehydroquinate = 3-dehydroshikimate + H2O. The protein operates within metabolic intermediate biosynthesis; chorismate biosynthesis; chorismate from D-erythrose 4-phosphate and phosphoenolpyruvate: step 3/7. Involved in the third step of the chorismate pathway, which leads to the biosynthesis of aromatic amino acids. Catalyzes the cis-dehydration of 3-dehydroquinate (DHQ) and introduces the first double bond of the aromatic ring to yield 3-dehydroshikimate. This chain is 3-dehydroquinate dehydratase, found in Streptococcus equi subsp. zooepidemicus (strain H70).